A 333-amino-acid chain; its full sequence is Fructose-1,6-bisphosphatase class 1 (333 aa).

The Mg(2+) site is built by E89, D110, L112, and D113. Residues 113–116, N206, Y239, 257–259, and K269 contribute to the substrate site; these read DGSS and YLY. Residue E275 participates in Mg(2+) binding.

Belongs to the FBPase class 1 family. Homotetramer. It depends on Mg(2+) as a cofactor.

Its subcellular location is the cytoplasm. The enzyme catalyses beta-D-fructose 1,6-bisphosphate + H2O = beta-D-fructose 6-phosphate + phosphate. Its pathway is carbohydrate biosynthesis; gluconeogenesis. The sequence is that of Fructose-1,6-bisphosphatase class 1 from Sodalis glossinidius (strain morsitans).